An 85-amino-acid chain; its full sequence is Small ribosomal subunit protein bS20 (85 aa).

This sequence belongs to the bacterial ribosomal protein bS20 family.

Binds directly to 16S ribosomal RNA. The polypeptide is Small ribosomal subunit protein bS20 (Borrelia garinii subsp. bavariensis (strain ATCC BAA-2496 / DSM 23469 / PBi) (Borreliella bavariensis)).